We begin with the raw amino-acid sequence, 507 residues long: Glycerol kinase (507 aa).

Position 12 (Thr-12) interacts with ADP. ATP-binding residues include Thr-12, Thr-13, and Ser-14. Residue Thr-12 participates in sn-glycerol 3-phosphate binding. Residue Arg-16 coordinates ADP. The sn-glycerol 3-phosphate site is built by Arg-82, Glu-83, Tyr-134, and Asp-250. 5 residues coordinate glycerol: Arg-82, Glu-83, Tyr-134, Asp-250, and Gln-251. Positions 272 and 316 each coordinate ADP. The ATP site is built by Thr-272, Gly-316, Gln-320, and Gly-417. ADP-binding residues include Gly-417 and Asn-421.

It belongs to the FGGY kinase family.

It carries out the reaction glycerol + ATP = sn-glycerol 3-phosphate + ADP + H(+). It functions in the pathway polyol metabolism; glycerol degradation via glycerol kinase pathway; sn-glycerol 3-phosphate from glycerol: step 1/1. Inhibited by fructose 1,6-bisphosphate (FBP). Functionally, key enzyme in the regulation of glycerol uptake and metabolism. Catalyzes the phosphorylation of glycerol to yield sn-glycerol 3-phosphate. The protein is Glycerol kinase of Beijerinckia indica subsp. indica (strain ATCC 9039 / DSM 1715 / NCIMB 8712).